Consider the following 159-residue polypeptide: 3-hydroxyacyl-[acyl-carrier-protein] dehydratase FabZ (159 aa).

Residue His-58 is part of the active site.

Belongs to the thioester dehydratase family. FabZ subfamily.

It is found in the cytoplasm. It catalyses the reaction a (3R)-hydroxyacyl-[ACP] = a (2E)-enoyl-[ACP] + H2O. Its function is as follows. Involved in unsaturated fatty acids biosynthesis. Catalyzes the dehydration of short chain beta-hydroxyacyl-ACPs and long chain saturated and unsaturated beta-hydroxyacyl-ACPs. This Helicobacter pylori (strain G27) protein is 3-hydroxyacyl-[acyl-carrier-protein] dehydratase FabZ.